The sequence spans 175 residues: ATP synthase subunit b (175 aa).

A helical transmembrane segment spans residues 22 to 42 (LNLLETNIINIAIVFGLLIFL).

Belongs to the ATPase B chain family. F-type ATPases have 2 components, F(1) - the catalytic core - and F(0) - the membrane proton channel. F(1) has five subunits: alpha(3), beta(3), gamma(1), delta(1), epsilon(1). F(0) has four main subunits: a(1), b(1), b'(1) and c(10-14). The alpha and beta chains form an alternating ring which encloses part of the gamma chain. F(1) is attached to F(0) by a central stalk formed by the gamma and epsilon chains, while a peripheral stalk is formed by the delta, b and b' chains.

The protein resides in the cell inner membrane. In terms of biological role, f(1)F(0) ATP synthase produces ATP from ADP in the presence of a proton or sodium gradient. F-type ATPases consist of two structural domains, F(1) containing the extramembraneous catalytic core and F(0) containing the membrane proton channel, linked together by a central stalk and a peripheral stalk. During catalysis, ATP synthesis in the catalytic domain of F(1) is coupled via a rotary mechanism of the central stalk subunits to proton translocation. Functionally, component of the F(0) channel, it forms part of the peripheral stalk, linking F(1) to F(0). The chain is ATP synthase subunit b from Gloeobacter violaceus (strain ATCC 29082 / PCC 7421).